A 108-amino-acid polypeptide reads, in one-letter code: uncharacterized protein (108 aa).

Positions Asn-48 to Thr-73 are enriched in low complexity. A disordered region spans residues Asn-48 to Lys-81.

This is an uncharacterized protein from Dictyostelium discoideum (Social amoeba).